We begin with the raw amino-acid sequence, 27 residues long: Bombinin-like peptide 2 (27 aa).

N27 is subject to Asparagine amide.

It belongs to the bombinin family. As to expression, expressed by the skin glands.

It localises to the secreted. Its function is as follows. Has antimicrobial activity, but no hemolytic activity. Preference on killing Gram-negative non-enteric bacteria. In Bombina orientalis (Oriental fire-bellied toad), this protein is Bombinin-like peptide 2.